A 244-amino-acid chain; its full sequence is MGHKVHPTGIRLGISKDWNSKWYANKGDFAAYLAADLKVREMLRKKLAQAGVSKILIERPAKTARVTIHTARPGVVIGKRGEDIEKLRKEVSELMGVPAHINVTEVRKPELDAQLVAESIAQQLERRIMFRRAMKRSVGNAMRLGALGIKVNVAGRLNGAEIARSEWYREGRVPLHTLRADIDYGFAEASTTYGIIGIKVWIYKGEVFDFSQVGQEKQDDSPRNDRNDRGDRGDRPSRPAREAR.

One can recognise a KH type-2 domain in the interval 39–107 (VREMLRKKLA…PAHINVTEVR (69 aa)). The tract at residues 213 to 244 (VGQEKQDDSPRNDRNDRGDRGDRPSRPAREAR) is disordered. The segment covering 216–244 (EKQDDSPRNDRNDRGDRGDRPSRPAREAR) has biased composition (basic and acidic residues).

It belongs to the universal ribosomal protein uS3 family. As to quaternary structure, part of the 30S ribosomal subunit. Forms a tight complex with proteins S10 and S14.

Functionally, binds the lower part of the 30S subunit head. Binds mRNA in the 70S ribosome, positioning it for translation. The sequence is that of Small ribosomal subunit protein uS3 from Xanthomonas oryzae pv. oryzae (strain MAFF 311018).